A 181-amino-acid polypeptide reads, in one-letter code: Ribonuclease HII (181 aa).

In terms of domain architecture, RNase H type-2 spans 1–181 (MICGIDEVGR…SLHRKSFRLI (181 aa)). A divalent metal cation-binding residues include Asp-6, Glu-7, and Asp-98.

The protein belongs to the RNase HII family. Mn(2+) serves as cofactor. Mg(2+) is required as a cofactor.

It localises to the cytoplasm. The enzyme catalyses Endonucleolytic cleavage to 5'-phosphomonoester.. Its function is as follows. Endonuclease that specifically degrades the RNA of RNA-DNA hybrids. The sequence is that of Ribonuclease HII from Borrelia recurrentis (strain A1).